The sequence spans 579 residues: Protein LYRIC (579 aa).

Residues 1-48 (MAARSWQDELAQQAEEGSARLRELLSVGLGFLRTELGLDLGLEPKRYP) lie on the Lumenal side of the membrane. Positions 1–71 (MAARSWQDEL…LLLFLLGYGW (71 aa)) are activation of NF-kappa-B. Residues 49-69 (GWVILVGTGALGLLLLFLLGY) traverse the membrane as a helical segment. Over 70–579 (GWAAACAGAR…KKKKKARRET (510 aa)) the chain is Cytoplasmic. The interaction with BCCIP stretch occupies residues 72 to 168 (AAACAGARKK…EKSKKNKKKS (97 aa)). The disordered stretch occupies residues 78 to 222 (ARKKRRSPPR…SGSLDSTIPG (145 aa)). The interaction with RELA stretch occupies residues 100 to 204 (DDLAQLKNLR…ISHREKRQQR (105 aa)). The segment covering 108 to 126 (LRSEEQKKKNRKKLPEKPK) has biased composition (basic and acidic residues). Residues 159 to 168 (EKSKKNKKKS) are compositionally biased toward basic residues. Ser179 is subject to Phosphoserine. A compositionally biased stretch (basic residues) spans 197–207 (HREKRQQRKRD). Residues Ser215 and Ser250 each carry the phosphoserine modification. Lys263 is subject to N6-acetyllysine. Residues 277 to 579 (NLTVNGGGWS…KKKKKARRET (303 aa)) are disordered. Phosphoserine is present on residues Ser297, Ser303, and Ser308. Over residues 317–329 (SAWTQDTGDTNAN) the composition is skewed to polar residues. Phosphoserine occurs at positions 341 and 366. Polar residues-rich tracts occupy residues 351–369 (EPVS…SRNQ), 380–391 (NGLSSADPSSDW), and 410–420 (LKSQEPISNDQ). A lung-homing for mammary tumors region spans residues 378 to 440 (GLNGLSSADP…EGALPTGKSK (63 aa)). Ser412 and Ser423 each carry phosphoserine. Basic and acidic residues predominate over residues 421 to 431 (KVSDDDKEKGE). Positions 438–448 (KSKKKKKKKKK) are enriched in basic residues. A compositionally biased stretch (basic and acidic residues) spans 449-470 (QGEDNSHTQDTEDLEKDTREEL). A phosphoserine mark is found at Ser454, Ser475, Ser491, and Ser493. Composition is skewed to polar residues over residues 517 to 533 (PSIT…SSQV) and 546 to 565 (NAKQ…NWES). Residue Ser565 is modified to Phosphoserine. Basic residues predominate over residues 568-579 (QIKKKKKARRET).

Interacts with BCCIP, CREBBP/CBP and RELA/p65. In terms of tissue distribution, in the mammary gland, expressed at the apical surface of epithelial cells lining ducts, as well as in the mammary fat pad. Not detected in the spleen, kidney, lung, or skin; minute amounts seen in the liver. Expressed in Purkinje neurons in the early postnatal and adult cerebellum. Overexpressed in mammary tumors (at protein level).

The protein resides in the endoplasmic reticulum membrane. The protein localises to the nucleus membrane. It localises to the cell junction. It is found in the tight junction. Its subcellular location is the nucleus. The protein resides in the nucleolus. The protein localises to the cytoplasm. It localises to the perinuclear region. Down-regulates SLC1A2/EAAT2 promoter activity when expressed ectopically. Activates the nuclear factor kappa-B (NF-kappa-B) transcription factor. Promotes anchorage-independent growth of immortalized melanocytes and astrocytes which is a key component in tumor cell expansion. Promotes lung metastasis and also has an effect on bone and brain metastasis, possibly by enhancing the seeding of tumor cells to the target organ endothelium. Induces chemoresistance. This is Protein LYRIC (Mtdh) from Mus musculus (Mouse).